Here is a 616-residue protein sequence, read N- to C-terminus: Dihydroxy-acid dehydratase (616 aa).

Aspartate 81 lines the Mg(2+) pocket. Cysteine 122 contributes to the [2Fe-2S] cluster binding site. 2 residues coordinate Mg(2+): aspartate 123 and lysine 124. Lysine 124 is modified (N6-carboxylysine). Residue cysteine 195 participates in [2Fe-2S] cluster binding. A Mg(2+)-binding site is contributed by glutamate 491. The Proton acceptor role is filled by serine 517.

The protein belongs to the IlvD/Edd family. In terms of assembly, homodimer. [2Fe-2S] cluster serves as cofactor. The cofactor is Mg(2+).

The catalysed reaction is (2R)-2,3-dihydroxy-3-methylbutanoate = 3-methyl-2-oxobutanoate + H2O. It catalyses the reaction (2R,3R)-2,3-dihydroxy-3-methylpentanoate = (S)-3-methyl-2-oxopentanoate + H2O. It participates in amino-acid biosynthesis; L-isoleucine biosynthesis; L-isoleucine from 2-oxobutanoate: step 3/4. It functions in the pathway amino-acid biosynthesis; L-valine biosynthesis; L-valine from pyruvate: step 3/4. Functions in the biosynthesis of branched-chain amino acids. Catalyzes the dehydration of (2R,3R)-2,3-dihydroxy-3-methylpentanoate (2,3-dihydroxy-3-methylvalerate) into 2-oxo-3-methylpentanoate (2-oxo-3-methylvalerate) and of (2R)-2,3-dihydroxy-3-methylbutanoate (2,3-dihydroxyisovalerate) into 2-oxo-3-methylbutanoate (2-oxoisovalerate), the penultimate precursor to L-isoleucine and L-valine, respectively. The sequence is that of Dihydroxy-acid dehydratase from Azoarcus sp. (strain BH72).